The primary structure comprises 298 residues: Apolipoprotein E (298 aa).

The first 18 residues, 1 to 18 (MKVLWAALVVTLLAGCQA), serve as a signal peptide directing secretion. Repeat copies occupy residues 74–95 (LLME…QELA), 96–117 (PMAE…SRLR), 118–139 (ADME…TMMG), 140–161 (QSGE…KRLL), 162–183 (RDVE…EGAE), and 223–244 (GRLE…EQME). An 8 X 22 AA approximate tandem repeats region spans residues 74 to 244 (LLMEDTMKEV…RLEEVREQME (171 aa)). A Methionine sulfoxide modification is found at Met137. Phosphoserine is present on Ser141. Positions 152–162 (HLRKLRKRLLR) are LDL and other lipoprotein receptors binding. A heparin-binding site is contributed by 156 to 159 (LRKR). A lipid-binding and lipoprotein association region spans residues 204-272 (SLPSQPLRER…SWFEPMMEDM (69 aa)). Heparin is bound at residue 218–225 (GEQMRGRL). Positions 260-272 (RFKSWFEPMMEDM) are specificity for association with VLDL.

This sequence belongs to the apolipoprotein A1/A4/E family. Homotetramer. May interact with ABCA1; functionally associated with ABCA1 in the biogenesis of HDLs. May interact with APP/A4 amyloid-beta peptide; the interaction is extremely stable in vitro but its physiological significance is unclear. May interact with MAPT. May interact with MAP2. In the cerebrospinal fluid, interacts with secreted SORL1. Interacts with PMEL; this allows the loading of PMEL luminal fragment on ILVs to induce fibril nucleation. In terms of processing, APOE exists as multiple glycosylated and sialylated glycoforms within cells and in plasma. The extent of glycosylation and sialylation are tissue and context specific. Post-translationally, glycated in plasma VLDL. Phosphorylated by FAM20C in the extracellular medium.

It is found in the secreted. Its subcellular location is the extracellular space. The protein resides in the extracellular matrix. The protein localises to the extracellular vesicle. It localises to the endosome. It is found in the multivesicular body. APOE is an apolipoprotein, a protein associating with lipid particles, that mainly functions in lipoprotein-mediated lipid transport between organs via the plasma and interstitial fluids. APOE is a core component of plasma lipoproteins and is involved in their production, conversion and clearance. Apolipoproteins are amphipathic molecules that interact both with lipids of the lipoprotein particle core and the aqueous environment of the plasma. As such, APOE associates with chylomicrons, chylomicron remnants, very low density lipoproteins (VLDL) and intermediate density lipoproteins (IDL) but shows a preferential binding to high-density lipoproteins (HDL). It also binds a wide range of cellular receptors including the LDL receptor/LDLR, the LDL receptor-related proteins LRP1, LRP2 and LRP8 and the very low-density lipoprotein receptor/VLDLR that mediate the cellular uptake of the APOE-containing lipoprotein particles. Finally, APOE also has a heparin-binding activity and binds heparan-sulfate proteoglycans on the surface of cells, a property that supports the capture and the receptor-mediated uptake of APOE-containing lipoproteins by cells. A main function of APOE is to mediate lipoprotein clearance through the uptake of chylomicrons, VLDLs, and HDLs by hepatocytes. APOE is also involved in the biosynthesis by the liver of VLDLs as well as their uptake by peripheral tissues ensuring the delivery of triglycerides and energy storage in muscle, heart and adipose tissues. By participating in the lipoprotein-mediated distribution of lipids among tissues, APOE plays a critical role in plasma and tissues lipid homeostasis. APOE is also involved in two steps of reverse cholesterol transport, the HDLs-mediated transport of cholesterol from peripheral tissues to the liver, and thereby plays an important role in cholesterol homeostasis. First, it is functionally associated with ABCA1 in the biogenesis of HDLs in tissues. Second, it is enriched in circulating HDLs and mediates their uptake by hepatocytes. APOE also plays an important role in lipid transport in the central nervous system, regulating neuron survival and sprouting. This is Apolipoprotein E (APOE) from Dasyprocta punctata (Central American agouti).